The chain runs to 295 residues: Ribosomal RNA small subunit methyltransferase A (295 aa).

The S-adenosyl-L-methionine site is built by Asn28, Leu30, Gly55, Glu76, Asp101, and Asn131.

It belongs to the class I-like SAM-binding methyltransferase superfamily. rRNA adenine N(6)-methyltransferase family. RsmA subfamily.

It localises to the cytoplasm. The catalysed reaction is adenosine(1518)/adenosine(1519) in 16S rRNA + 4 S-adenosyl-L-methionine = N(6)-dimethyladenosine(1518)/N(6)-dimethyladenosine(1519) in 16S rRNA + 4 S-adenosyl-L-homocysteine + 4 H(+). Specifically dimethylates two adjacent adenosines (A1518 and A1519) in the loop of a conserved hairpin near the 3'-end of 16S rRNA in the 30S particle. May play a critical role in biogenesis of 30S subunits. The polypeptide is Ribosomal RNA small subunit methyltransferase A (Pelotomaculum thermopropionicum (strain DSM 13744 / JCM 10971 / SI)).